We begin with the raw amino-acid sequence, 151 residues long: Neuroglobin (151 aa).

One can recognise a Globin domain in the interval 1-149 (MELPEPELIR…VVQAMSRGWG (149 aa)). Residues His64 and His96 each contribute to the heme b site.

The protein belongs to the globin family. Monomer. Homodimer and homotetramer; disulfide-linked. Mainly monomeric but also detected as part of homodimers and homotetramers. Interacts with 14-3-3 proteins; regulates the phosphorylation of NGB. Could interact (ferrous form) with G-alpha(i) proteins (GTP-bound form). Post-translationally, phosphorylated during hypoxia by ERK1/ERK2. Phosphorylation regulates the heme pocket hexacoordination preventing the association of His-64 with the heme metal center. Thereby, promotes the access of dioxygen and nitrite to the heme and stimulates the nitrite reductase activity. Phosphorylation during hypoxia is stabilized by 14-3-3 proteins.

It localises to the cytoplasm. The protein localises to the cytosol. Its subcellular location is the mitochondrion matrix. The enzyme catalyses Fe(III)-heme b-[protein] + nitric oxide + H2O = Fe(II)-heme b-[protein] + nitrite + 2 H(+). Its function is as follows. Monomeric globin with a bis-histidyl six-coordinate heme-iron atom through which it can bind dioxygen, carbon monoxide and nitric oxide. Could help transport oxygen and increase its availability to the metabolically active neuronal tissues, though its low quantity in tissues as well as its high affinity for dioxygen, which may limit its oxygen-releasing ability, argue against it. The ferrous/deoxygenated form exhibits a nitrite reductase activity and it could produce nitric oxide which in turn inhibits cellular respiration in response to hypoxia. In its ferrous/deoxygenated state, it may also exhibit GDI (Guanine nucleotide Dissociation Inhibitor) activity toward heterotrimeric G-alpha proteins, thereby regulating signal transduction to facilitate neuroprotective responses in the wake of hypoxia and associated oxidative stress. The sequence is that of Neuroglobin from Bos taurus (Bovine).